The sequence spans 244 residues: Ribosomal RNA large subunit methyltransferase E (244 aa).

Residues Gly-81, Trp-83, Asp-109, Asp-125, and Asp-149 each contribute to the S-adenosyl-L-methionine site. Catalysis depends on Lys-189, which acts as the Proton acceptor.

This sequence belongs to the class I-like SAM-binding methyltransferase superfamily. RNA methyltransferase RlmE family.

The protein resides in the cytoplasm. The enzyme catalyses uridine(2552) in 23S rRNA + S-adenosyl-L-methionine = 2'-O-methyluridine(2552) in 23S rRNA + S-adenosyl-L-homocysteine + H(+). In terms of biological role, specifically methylates the uridine in position 2552 of 23S rRNA at the 2'-O position of the ribose in the fully assembled 50S ribosomal subunit. The chain is Ribosomal RNA large subunit methyltransferase E from Cereibacter sphaeroides (strain ATCC 17023 / DSM 158 / JCM 6121 / CCUG 31486 / LMG 2827 / NBRC 12203 / NCIMB 8253 / ATH 2.4.1.) (Rhodobacter sphaeroides).